Here is a 553-residue protein sequence, read N- to C-terminus: Glycerol kinase 3 (553 aa).

Thr-20 provides a ligand contact to substrate. Arg-24 lines the ATP pocket. Residues Arg-94, Tyr-148, and Asp-259 each contribute to the substrate site. Residues Thr-281, Gly-326, and 427–431 (GMTSN) contribute to the ATP site.

The protein belongs to the FGGY kinase family.

It is found in the mitochondrion outer membrane. Its subcellular location is the cytoplasm. It catalyses the reaction glycerol + ATP = sn-glycerol 3-phosphate + ADP + H(+). Its pathway is polyol metabolism; glycerol degradation via glycerol kinase pathway; sn-glycerol 3-phosphate from glycerol: step 1/1. Functionally, may be involved in the regulation of glycerol uptake and metabolism. This chain is Glycerol kinase 3, found in Homo sapiens (Human).